The primary structure comprises 236 residues: Ribonuclease HIII (236 aa).

The 228-residue stretch at Leu9–Ala236 folds into the RNase H type-2 domain. A divalent metal cation-binding residues include Asp15, Glu16, and Asp122.

It belongs to the RNase HII family. RnhC subfamily. A divalent metal cation serves as cofactor.

The protein localises to the cytoplasm. It carries out the reaction Endonucleolytic cleavage to 5'-phosphomonoester.. Endonuclease that specifically degrades the RNA of RNA-DNA hybrids. The protein is Ribonuclease HIII (rnhC) of Mycoplasma pneumoniae (strain ATCC 29342 / M129 / Subtype 1) (Mycoplasmoides pneumoniae).